Reading from the N-terminus, the 793-residue chain is Coiled-coil domain-containing protein 175 (793 aa).

Coiled-coil stretches lie at residues 131 to 163, 205 to 377, 431 to 535, 562 to 679, and 716 to 745; these read EINT…NEAL, KRED…VLSE, KTVY…MLMK, LPQL…KYRE, and LVDN…QHVS.

This Homo sapiens (Human) protein is Coiled-coil domain-containing protein 175 (CCDC175).